Consider the following 272-residue polypeptide: Ribosomal RNA small subunit methyltransferase A (272 aa).

Residues Asn-18, Leu-20, Gly-45, Glu-66, Asp-91, and Asn-113 each coordinate S-adenosyl-L-methionine.

It belongs to the class I-like SAM-binding methyltransferase superfamily. rRNA adenine N(6)-methyltransferase family. RsmA subfamily.

The protein localises to the cytoplasm. It carries out the reaction adenosine(1518)/adenosine(1519) in 16S rRNA + 4 S-adenosyl-L-methionine = N(6)-dimethyladenosine(1518)/N(6)-dimethyladenosine(1519) in 16S rRNA + 4 S-adenosyl-L-homocysteine + 4 H(+). Its function is as follows. Specifically dimethylates two adjacent adenosines (A1518 and A1519) in the loop of a conserved hairpin near the 3'-end of 16S rRNA in the 30S particle. May play a critical role in biogenesis of 30S subunits. The chain is Ribosomal RNA small subunit methyltransferase A from Pectobacterium atrosepticum (strain SCRI 1043 / ATCC BAA-672) (Erwinia carotovora subsp. atroseptica).